The following is a 249-amino-acid chain: tRNA (guanine-N(1)-)-methyltransferase (249 aa).

S-adenosyl-L-methionine is bound by residues Gly-113 and 133-138; that span reads IGDFVV.

This sequence belongs to the RNA methyltransferase TrmD family. In terms of assembly, homodimer.

Its subcellular location is the cytoplasm. It carries out the reaction guanosine(37) in tRNA + S-adenosyl-L-methionine = N(1)-methylguanosine(37) in tRNA + S-adenosyl-L-homocysteine + H(+). Specifically methylates guanosine-37 in various tRNAs. The chain is tRNA (guanine-N(1)-)-methyltransferase from Neisseria meningitidis serogroup C / serotype 2a (strain ATCC 700532 / DSM 15464 / FAM18).